We begin with the raw amino-acid sequence, 431 residues long: Na(+)/H(+) antiporter NhaA (431 aa).

The next 11 membrane-spanning stretches (helical) occupy residues 33–53, 74–94, 112–132, 144–164, 173–193, 197–217, 225–245, 279–299, 311–331, 347–367, and 379–399; these read VGGA…NSPW, LSIS…VVGV, ALPI…FVGV, GWAI…AVIA, IFLL…IAVF, QLSF…GLAV, FLLL…GVHA, FAVP…LSGF, VIAG…YVLA, VLGL…IGEL, and AKIA…VVLL.

The protein belongs to the NhaA Na(+)/H(+) (TC 2.A.33) antiporter family.

It localises to the cell membrane. The enzyme catalyses Na(+)(in) + 2 H(+)(out) = Na(+)(out) + 2 H(+)(in). Na(+)/H(+) antiporter that extrudes sodium in exchange for external protons. The sequence is that of Na(+)/H(+) antiporter NhaA from Mycolicibacterium smegmatis (strain ATCC 700084 / mc(2)155) (Mycobacterium smegmatis).